Reading from the N-terminus, the 184-residue chain is Protein YrdA (184 aa).

Belongs to the gamma-class carbonic anhydrase family.

The chain is Protein YrdA (yrdA) from Escherichia coli (strain K12).